The following is a 146-amino-acid chain: Putative pre-16S rRNA nuclease (146 aa).

Belongs to the YqgF nuclease family.

It is found in the cytoplasm. Could be a nuclease involved in processing of the 5'-end of pre-16S rRNA. The polypeptide is Putative pre-16S rRNA nuclease (Pseudomonas syringae pv. syringae (strain B728a)).